Consider the following 487-residue polypeptide: N-succinylglutamate 5-semialdehyde dehydrogenase (487 aa).

Residue 221 to 226 (GSSDTG) coordinates NAD(+). Catalysis depends on residues glutamate 244 and cysteine 278.

The protein belongs to the aldehyde dehydrogenase family. AstD subfamily.

It catalyses the reaction N-succinyl-L-glutamate 5-semialdehyde + NAD(+) + H2O = N-succinyl-L-glutamate + NADH + 2 H(+). Its pathway is amino-acid degradation; L-arginine degradation via AST pathway; L-glutamate and succinate from L-arginine: step 4/5. Catalyzes the NAD-dependent reduction of succinylglutamate semialdehyde into succinylglutamate. In Burkholderia pseudomallei (strain 1106a), this protein is N-succinylglutamate 5-semialdehyde dehydrogenase.